Consider the following 437-residue polypeptide: Ribosomal protein uS12 methylthiotransferase RimO (437 aa).

Positions 9–128 constitute an MTTase N-terminal domain; the sequence is NKINVITLGC…LLKALGADYK (120 aa). 6 residues coordinate [4Fe-4S] cluster: Cys18, Cys57, Cys91, Cys152, Cys156, and Cys159. Positions 138 to 368 constitute a Radical SAM core domain; sequence TTPKNYAYLK…MELQSQISWD (231 aa). The region spanning 371-437 is the TRAM domain; that stretch reads QEKVGQVFRC…TEFDLYGEPA (67 aa).

The protein belongs to the methylthiotransferase family. RimO subfamily. Requires [4Fe-4S] cluster as cofactor.

It localises to the cytoplasm. It catalyses the reaction L-aspartate(89)-[ribosomal protein uS12]-hydrogen + (sulfur carrier)-SH + AH2 + 2 S-adenosyl-L-methionine = 3-methylsulfanyl-L-aspartate(89)-[ribosomal protein uS12]-hydrogen + (sulfur carrier)-H + 5'-deoxyadenosine + L-methionine + A + S-adenosyl-L-homocysteine + 2 H(+). In terms of biological role, catalyzes the methylthiolation of an aspartic acid residue of ribosomal protein uS12. The polypeptide is Ribosomal protein uS12 methylthiotransferase RimO (Flavobacterium johnsoniae (strain ATCC 17061 / DSM 2064 / JCM 8514 / BCRC 14874 / CCUG 350202 / NBRC 14942 / NCIMB 11054 / UW101) (Cytophaga johnsonae)).